A 130-amino-acid chain; its full sequence is Large ribosomal subunit protein bL17 (130 aa).

This sequence belongs to the bacterial ribosomal protein bL17 family. In terms of assembly, part of the 50S ribosomal subunit. Contacts protein L32.

The chain is Large ribosomal subunit protein bL17 from Pectobacterium atrosepticum (strain SCRI 1043 / ATCC BAA-672) (Erwinia carotovora subsp. atroseptica).